Here is a 452-residue protein sequence, read N- to C-terminus: Chloride/fluoride channel protein (452 aa).

The next 10 membrane-spanning stretches (helical) occupy residues 23–43, 57–77, 97–117, 160–180, 188–208, 222–242, 264–284, 315–337, 344–364, and 386–408; these read WLAL…LFLL, WVIW…HLIG, IVPL…HLFG, FASV…VLAI, LFPC…WGVV, LWSV…GLLF, PFAG…NHYI, VFTV…FYIG, LAPL…VAVF, and IAPL…GIYH.

The protein belongs to the chloride channel (TC 2.A.49) family.

The protein localises to the cell membrane. Functionally, transports chloride and fluoride with similar efficiency. This chain is Chloride/fluoride channel protein (eriC), found in Pseudomonas syringae pv. tomato (strain ATCC BAA-871 / DC3000).